The primary structure comprises 262 residues: MRTSRLKKPIVLLTIALLSSVFFFAFFFLNKSDVSSTSALRNRDSMARTFILWLHGLGDSGPANEPIKTLFRSQEFRNTKWLFPSAPPNPVSCNYGAVMPSWFDIPELPLTAGSPKDESSLLKAVKNVHAIIDKEIAGGINPENVYICGFSQGGALTLASVLLYPKTIGGGAVFSGWIPFNSSITNQFTEDAKKTPILWSHGIDDKTVLFEAGQAALPFLQQAGVTCEFKAYPGLGHSISNEELQYLESWLKQRMQSSSSSS.

Catalysis depends on charge relay system residues S151, D205, and H237.

This sequence belongs to the AB hydrolase superfamily. AB hydrolase 2 family.

Carboxylesterase. In Arabidopsis thaliana (Mouse-ear cress), this protein is Probable carboxylesterase SOBER1-like.